The following is a 264-amino-acid chain: Thiazole synthase (264 aa).

Lys106 serves as the catalytic Schiff-base intermediate with DXP. Residues Gly167, Ala193–Gly194, and Asn215–Thr216 contribute to the 1-deoxy-D-xylulose 5-phosphate site.

It belongs to the ThiG family. In terms of assembly, homotetramer. Forms heterodimers with either ThiH or ThiS.

The protein resides in the cytoplasm. It carries out the reaction [ThiS sulfur-carrier protein]-C-terminal-Gly-aminoethanethioate + 2-iminoacetate + 1-deoxy-D-xylulose 5-phosphate = [ThiS sulfur-carrier protein]-C-terminal Gly-Gly + 2-[(2R,5Z)-2-carboxy-4-methylthiazol-5(2H)-ylidene]ethyl phosphate + 2 H2O + H(+). The protein operates within cofactor biosynthesis; thiamine diphosphate biosynthesis. Its function is as follows. Catalyzes the rearrangement of 1-deoxy-D-xylulose 5-phosphate (DXP) to produce the thiazole phosphate moiety of thiamine. Sulfur is provided by the thiocarboxylate moiety of the carrier protein ThiS. In vitro, sulfur can be provided by H(2)S. The protein is Thiazole synthase of Stenotrophomonas maltophilia (strain K279a).